The sequence spans 474 residues: MKTKCICELCSCGRHHCPHLPTKIYDKTEKPCLLSEYTENYPCYHSYLPRESFKPRREYQKGSIPMEGLTTSRRDFGPHKVAPVKAHQYDQFVPSEENMDLLTTYKKDYNPYTVCRVDPIKPRDSKYPYSNKMEYLPTYKADYLPWNQPRRQPLRLEHKYQPASVRFDNRTTHQDDYPIKGLVKTVSCKPLAMPKLCNIPLEDVTNYKMSYVAHPVEKRFVHEAEKFRPCEIPFESLTTHKQSYRGLMGEPAKSLKPLARPPGLDMPFSNTTEFRDKYQAWPTPQMFSKAPITYVPPEDSMDLLTTVQAHYTYPKGVPARSCRPAPQIRKSGRFEGSSTTKDDYKQWSSMRTEPVKPIPQLDFPTEPLDCLTTTRAHYVPHPPINTKSCKPHWSGPRGNVPVEGQTTYTISFTPKEMSKCLASYPEPPGYTFEEVDALGHRIYKPVSQAGSQQSSHLSVDDSENPSQRKLEVSA.

12 mn regions span residues K30 to I64, P65 to E97, N98 to N131, K132 to V165, R166 to I199, P200 to I232, P233 to M266, P267 to D299, S300 to G332, R333 to E366, P367 to V400, and P401 to E434. Residues P318–M350 form a disordered region. The interval K444–A474 is disordered. Residues Q448 to L457 show a composition bias toward polar residues.

Belongs to the FAM154 family. In terms of assembly, associates with microtubules via the Mn regions.

It is found in the cytoplasm. Its subcellular location is the cytoskeleton. The protein localises to the microtubule organizing center. It localises to the centrosome. The protein resides in the centriole. It is found in the cilium basal body. Its subcellular location is the cilium axoneme. The protein localises to the flagellum axoneme. Functionally, may play a role in the regulation of cilium length. Stabilizes microtubules at low temperature. The protein is Stabilizer of axonemal microtubules 1 (SAXO1) of Macaca fascicularis (Crab-eating macaque).